The sequence spans 51 residues: uncharacterized protein (51 aa).

The chain crosses the membrane as a helical span at residues 10–29; that stretch reads LFLYHPLFLLLLYIYLVLFI.

The protein localises to the plastid. It is found in the chloroplast membrane. This is an uncharacterized protein from Anthoceros angustus (Hornwort).